The primary structure comprises 1446 residues: Bud site selection protein 4 (1446 aa).

Disordered regions lie at residues 69–103 (NQWN…TNLL), 358–385 (VSEE…NPSS), 425–446 (DNNI…SGKE), 495–525 (ASED…QNLE), 823–844 (SSSL…SQAF), and 1025–1044 (KKNT…RVSS). Residues 86–98 (NYDDDEEQGDESD) are compositionally biased toward acidic residues. Composition is skewed to polar residues over residues 425-434 (DNNISKSAND) and 495-524 (ASED…QQNL). Residues 1028-1044 (TQKDLKDGTTAEKRVSS) are compositionally biased toward basic and acidic residues. Residues 1314–1425 (DITKEGYLLQ…WYMKLKEVVE (112 aa)) form the PH domain.

Belongs to the BUD4 family.

The protein resides in the bud neck. Functionally, required for selection of future bud sites. Cooperates with other bud site selection proteins to recognize a spatial landmark during mitosis and they subsequently become a landmark for downstream polarity establishment factors that coordinate budding and cytokinesis. Involved in the septin organization at the bud neck. This chain is Bud site selection protein 4 (BUD4), found in Candida glabrata (strain ATCC 2001 / BCRC 20586 / JCM 3761 / NBRC 0622 / NRRL Y-65 / CBS 138) (Yeast).